We begin with the raw amino-acid sequence, 271 residues long: Tryptophan synthase alpha chain (271 aa).

Catalysis depends on proton acceptor residues Glu-49 and Asp-60.

The protein belongs to the TrpA family. As to quaternary structure, tetramer of two alpha and two beta chains.

The catalysed reaction is (1S,2R)-1-C-(indol-3-yl)glycerol 3-phosphate + L-serine = D-glyceraldehyde 3-phosphate + L-tryptophan + H2O. It participates in amino-acid biosynthesis; L-tryptophan biosynthesis; L-tryptophan from chorismate: step 5/5. Functionally, the alpha subunit is responsible for the aldol cleavage of indoleglycerol phosphate to indole and glyceraldehyde 3-phosphate. The polypeptide is Tryptophan synthase alpha chain (Burkholderia multivorans (strain ATCC 17616 / 249)).